Here is a 186-residue protein sequence, read N- to C-terminus: Large ribosomal subunit protein eL18B (186 aa).

K50 carries the N6,N6,N6-trimethyllysine modification. K116 participates in a covalent cross-link: Glycyl lysine isopeptide (Lys-Gly) (interchain with G-Cter in ubiquitin).

Belongs to the eukaryotic ribosomal protein eL18 family. As to quaternary structure, component of the large ribosomal subunit (LSU). Mature yeast ribosomes consist of a small (40S) and a large (60S) subunit. The 40S small subunit contains 1 molecule of ribosomal RNA (18S rRNA) and 33 different proteins (encoded by 57 genes). The large 60S subunit contains 3 rRNA molecules (25S, 5.8S and 5S rRNA) and 46 different proteins (encoded by 81 genes). eL18 interacts with NAP1.

It is found in the cytoplasm. Component of the ribosome, a large ribonucleoprotein complex responsible for the synthesis of proteins in the cell. The small ribosomal subunit (SSU) binds messenger RNAs (mRNAs) and translates the encoded message by selecting cognate aminoacyl-transfer RNA (tRNA) molecules. The large subunit (LSU) contains the ribosomal catalytic site termed the peptidyl transferase center (PTC), which catalyzes the formation of peptide bonds, thereby polymerizing the amino acids delivered by tRNAs into a polypeptide chain. The nascent polypeptides leave the ribosome through a tunnel in the LSU and interact with protein factors that function in enzymatic processing, targeting, and the membrane insertion of nascent chains at the exit of the ribosomal tunnel. The chain is Large ribosomal subunit protein eL18B from Saccharomyces cerevisiae (strain ATCC 204508 / S288c) (Baker's yeast).